Reading from the N-terminus, the 462-residue chain is Cytokine-like nuclear factor N-PAC (462 aa).

Positions 8 to 66 (IGDLVWGKLGRYPPWPGKVVSPPKDLKKPRGKKCFFVKFFGTEDHAWIKVEQLKPYHPH) constitute a PWWP domain. Residues 91-111 (KKAKGKDQSHSDDKSKSDKGR) are compositionally biased toward basic and acidic residues. The disordered stretch occupies residues 91–139 (KKAKGKDQSHSDDKSKSDKGRKAAKPMKIIEEDDEDAFKGGSSDKPASS). The dehydrogenase domain stretch occupies residues 169 to 462 (GSITPTDKRI…MSAVYRAYIH (294 aa)). Residues 179 to 193 (GFLGLGLMGSGVVSN), threonine 270, and lysine 414 contribute to the NAD(+) site.

This sequence belongs to the HIBADH-related family. NP60 subfamily. Homotetramere. Binds to mononucleosomes.

The protein localises to the nucleus. The protein resides in the chromosome. In terms of biological role, may have oxidoreductase activity. Regulates p38 MAP kinase activity by mediating stress activation of mapk14 and specifically regulating mapk14 signaling. Functionally, cytokine-like nuclear factor with chromatin gene reader activity involved in chromatin modification and regulation of gene expression. Acts as a nucleosome-destabilizing factor that is recruited to genes during transcriptional activation. Recognizes and binds histone H3 without a preference for specific epigenetic markers and also binds DNA. Interacts with KDM1B and promotes its histone demethylase activity by facilitating the capture of H3 tails, they form a multifunctional enzyme complex that modifies transcribed chromatin and facilitates Pol II transcription through nucleosomes. This is Cytokine-like nuclear factor N-PAC (glyr1) from Danio rerio (Zebrafish).